The following is a 914-amino-acid chain: Serine/threonine-protein kinase MST20 (914 aa).

Polar residues predominate over residues 1–12; sequence MDGHSNFTQPSD. 3 disordered regions span residues 1-140, 156-184, and 251-286; these read MDGH…QLQN, NQYS…LTFN, and AMSE…VLRK. Composition is skewed to low complexity over residues 13–26, 63–72, and 79–97; these read TSHA…SSSS, RSSTSLRRAP, and TPTS…PSSS. Residues 122–136 show a composition bias toward basic and acidic residues; sequence ARDRDSDPARNDHGH. Over residues 156-166 the composition is skewed to basic residues; it reads NQYSAASHRRS. The segment covering 175 to 184 has biased composition (polar residues); it reads PQSSNSLTFN. Positions 271–280 are enriched in basic and acidic residues; sequence RYSDETKEPK. The 14-residue stretch at 306 to 319 folds into the CRIB domain; sequence ISAPENPVHVTHVG. A disordered region spans residues 408–615; that stretch reads SPMISPPASP…RHRSRQSNGL (208 aa). Low complexity-rich tracts occupy residues 516–548 and 562–576; these read AYPA…QAQA and QPQA…SQHQ. Residues 577–586 are compositionally biased toward polar residues; sequence YSRPTDANGA. A compositionally biased stretch (low complexity) spans 587 to 596; sequence QQTQRPQQPQ. In terms of domain architecture, Protein kinase spans 634–885; it reads YRSFTKIGQG…AHDLLRHEFM (252 aa). Residues 640 to 648 and Lys663 each bind ATP; that span reads IGQGASGGV. Residue Asp753 is the Proton acceptor of the active site.

This sequence belongs to the protein kinase superfamily. STE Ser/Thr protein kinase family. STE20 subfamily.

It is found in the cytoplasm. It localises to the nucleus. It catalyses the reaction L-seryl-[protein] + ATP = O-phospho-L-seryl-[protein] + ADP + H(+). The catalysed reaction is L-threonyl-[protein] + ATP = O-phospho-L-threonyl-[protein] + ADP + H(+). MAP4K component of the MAPK pathway required for the mating pheromone response and the regulation of cell polarity and cell cycle. Phosphorylates histone H2B to form H2BS10ph. Is involved in conidiation, aerial hyphal growth and infection-related morphogenesis. The sequence is that of Serine/threonine-protein kinase MST20 (MST20) from Pyricularia oryzae (strain 70-15 / ATCC MYA-4617 / FGSC 8958) (Rice blast fungus).